Reading from the N-terminus, the 339-residue chain is Biotin synthase (339 aa).

Residues 51–278 (SEVELATLLS…KARVRLSAGR (228 aa)) enclose the Radical SAM core domain. [4Fe-4S] cluster contacts are provided by C66, C70, and C73. The [2Fe-2S] cluster site is built by C110, C141, C201, and R273.

It belongs to the radical SAM superfamily. Biotin synthase family. As to quaternary structure, homodimer. Requires [4Fe-4S] cluster as cofactor. The cofactor is [2Fe-2S] cluster.

It carries out the reaction (4R,5S)-dethiobiotin + (sulfur carrier)-SH + 2 reduced [2Fe-2S]-[ferredoxin] + 2 S-adenosyl-L-methionine = (sulfur carrier)-H + biotin + 2 5'-deoxyadenosine + 2 L-methionine + 2 oxidized [2Fe-2S]-[ferredoxin]. It participates in cofactor biosynthesis; biotin biosynthesis; biotin from 7,8-diaminononanoate: step 2/2. In terms of biological role, catalyzes the conversion of dethiobiotin (DTB) to biotin by the insertion of a sulfur atom into dethiobiotin via a radical-based mechanism. The protein is Biotin synthase of Herminiimonas arsenicoxydans.